Here is a 270-residue protein sequence, read N- to C-terminus: Nuclease PA3 (270 aa).

Trp-1, His-6, His-15, Asp-45, and His-60 together coordinate a divalent metal cation. 1–6 (WGALGH) serves as a coordination point for substrate. Residues 45 to 51 (DEYRLTS), 60 to 63 (HFID), and 73 to 78 (NVDYER) contribute to the substrate site. Cystine bridges form between Cys-72/Cys-217 and Cys-80/Cys-85. Position 92 (Asn-92) interacts with substrate. The N-linked (GlcNAc...) asparagine glycan is linked to Asn-92. 3 residues coordinate a divalent metal cation: His-116, Asp-120, and His-126. Positions 116–164 (HFIGDMTQPLHDEAYAVGGNKINVTFDGYHDNLHSDWDTYMPQKLIGGH) are substrate binding. Asn-138 is a glycosylation site (N-linked (GlcNAc...) asparagine). A divalent metal cation-binding residues include His-149 and Asp-153. Residues Asn-184 and Asn-197 are each glycosylated (N-linked (GlcNAc...) asparagine).

It belongs to the nuclease type I family. It depends on Zn(2+) as a cofactor.

The protein localises to the secreted. It catalyses the reaction a ribonucleoside 3'-phosphate + H2O = a ribonucleoside + phosphate. Functionally, hydrolyzes only single-stranded DNA and RNA without apparent specificity for bases. In Penicillium sp, this protein is Nuclease PA3.